Reading from the N-terminus, the 83-residue chain is Protein ShK-like4 (83 aa).

Residues 1–21 (MDTRVIAVLFVAIMVLSSTNA) form the signal peptide. A propeptide spanning residues 22-48 (LPKQKGSYKNMNHADFLKGLDRASSKR) is cleaved from the precursor. Cystine bridges form between C50–C82, C57–C75, and C67–C79. The region spanning 50-83 (CRDSHWSCFFQSNYEDICSTAQAEECALSCGLCE) is the ShKT domain.

Post-translationally, contains 3 disulfide bonds. As to expression, expressed in various neurons (ectodermal sensory cells) (in planulae and primary polyps). Not expressed in nematocytes.

Its function is as follows. Probable neuropeptide. This chain is Protein ShK-like4, found in Nematostella vectensis (Starlet sea anemone).